The chain runs to 309 residues: Putative S-adenosyl-L-methionine-dependent methyltransferase Mflv_0743 (309 aa).

Residues Asp-134 and 163-164 (DL) each bind S-adenosyl-L-methionine.

Belongs to the UPF0677 family.

Functionally, exhibits S-adenosyl-L-methionine-dependent methyltransferase activity. This chain is Putative S-adenosyl-L-methionine-dependent methyltransferase Mflv_0743, found in Mycolicibacterium gilvum (strain PYR-GCK) (Mycobacterium gilvum (strain PYR-GCK)).